The primary structure comprises 535 residues: Probable cytochrome P450 12b2, mitochondrial (535 aa).

Cysteine 479 is a binding site for heme.

Belongs to the cytochrome P450 family. Heme is required as a cofactor.

The protein localises to the mitochondrion membrane. In Drosophila melanogaster (Fruit fly), this protein is Probable cytochrome P450 12b2, mitochondrial (Cyp12b2).